Here is a 132-residue protein sequence, read N- to C-terminus: T-cell receptor alpha chain V region 2B4 (132 aa).

A signal peptide spans 1-20; the sequence is MKSLSVSLVVLWLLLNWVNS. The segment at 21-113 is v segment; it reads QQNVQQSPES…SALYLCAVTL (93 aa). The N-linked (GlcNAc...) asparagine glycan is linked to Asn42. The tract at residues 114-117 is d segment; sequence YGGS. The tract at residues 118-132 is j segment; it reads GNKLIFGTGTLLSVK.

This Mus musculus (Mouse) protein is T-cell receptor alpha chain V region 2B4.